We begin with the raw amino-acid sequence, 496 residues long: Geranylhydroquinone 3''-hydroxylase CYP76B74 (496 aa).

The helical transmembrane segment at tyrosine 3–lysine 23 threads the bilayer. Cysteine 436 lines the heme pocket.

The protein belongs to the cytochrome P450 family. It depends on heme as a cofactor.

It localises to the endoplasmic reticulum membrane. The catalysed reaction is (2E)-geranylhydroquinone + reduced [NADPH--hemoprotein reductase] + O2 = (2Z)-3''-hydroxygeranylhydroquinone + oxidized [NADPH--hemoprotein reductase] + H2O + H(+). Functionally, hydroxylase involved in the biosynthesis pathway of the red naphthoquinone pigment shikonin. Catalyzes the key step C-3''-hydroxylation of the prenylated phenolic intermediate geranylhydroquinone to form 3''-hydroxygeranylhydroquinone. In Arnebia euchroma (Pink arnebia), this protein is Geranylhydroquinone 3''-hydroxylase CYP76B74.